The primary structure comprises 63 residues: MSKVCEICGKRPTTGNTVSHSNKKNKRWWKPNVQKVKVIVDGEVKKMRVCTKCLKAGKVQRAV.

The protein belongs to the bacterial ribosomal protein bL28 family.

The polypeptide is Large ribosomal subunit protein bL28 (Kosmotoga olearia (strain ATCC BAA-1733 / DSM 21960 / TBF 19.5.1)).